The chain runs to 259 residues: MQSTHISGGSSGGGGGGGGEVSRSGLSRIRSAPATWIETLLEEDEEEGLKPNLCLTELLTGNNNSGGVITSRDDSFEFLSSVEQGLYNHHQGGGFHRQNSSPADFLSGSGSGTDGYFSNFGIPANYDYLSTNVDISPTKRSRDMETQFSSQLKEEQMSGGISGMMDMNMDKIFEDSVPCRVRAKRGCATHPRSIAERVRRTRISDRIRRLQELVPNMDKQTNTADMLEEAVEYVKALQSQIQELTEQQKRCKCKPKEEQ.

Residues 1–25 are disordered; that stretch reads MQSTHISGGSSGGGGGGGGEVSRSG. A compositionally biased stretch (gly residues) spans 9 to 20; it reads GSSGGGGGGGGE. The bHLH domain occupies 187–237; sequence CATHPRSIAERVRRTRISDRIRRLQELVPNMDKQTNTADMLEEAVEYVKAL.

As to quaternary structure, homodimer. As to expression, expressed constitutively in roots, leaves, stems, and flowers.

The protein resides in the nucleus. In Arabidopsis thaliana (Mouse-ear cress), this protein is Transcription factor bHLH80 (BHLH80).